Here is a 111-residue protein sequence, read N- to C-terminus: Dynein light chain Tctex-type (111 aa).

This sequence belongs to the dynein light chain Tctex-type family.

It localises to the cytoplasm. The protein localises to the cytoskeleton. In terms of biological role, acts as a non-catalytic accessory component of a dynein complex. This is Dynein light chain Tctex-type (dlc1) from Schizosaccharomyces pombe (strain 972 / ATCC 24843) (Fission yeast).